Consider the following 149-residue polypeptide: Secreted RxLR effector protein 47 (149 aa).

The N-terminal stretch at 1–22 (MICLLPLIAVMLFVFATHTVLA) is a signal peptide. Positions 57–79 (RFLRQETTFEEKPSVNDVHAEER) match the RxLR-dEER motif.

It belongs to the RxLR effector family.

It localises to the secreted. The protein resides in the host membrane. Secreted effector that completely suppresses the host cell death induced by cell death-inducing proteins. This is Secreted RxLR effector protein 47 from Plasmopara viticola (Downy mildew of grapevine).